A 95-amino-acid chain; its full sequence is Aspartyl/glutamyl-tRNA(Asn/Gln) amidotransferase subunit C (95 aa).

This sequence belongs to the GatC family. As to quaternary structure, heterotrimer of A, B and C subunits.

It carries out the reaction L-glutamyl-tRNA(Gln) + L-glutamine + ATP + H2O = L-glutaminyl-tRNA(Gln) + L-glutamate + ADP + phosphate + H(+). It catalyses the reaction L-aspartyl-tRNA(Asn) + L-glutamine + ATP + H2O = L-asparaginyl-tRNA(Asn) + L-glutamate + ADP + phosphate + 2 H(+). In terms of biological role, allows the formation of correctly charged Asn-tRNA(Asn) or Gln-tRNA(Gln) through the transamidation of misacylated Asp-tRNA(Asn) or Glu-tRNA(Gln) in organisms which lack either or both of asparaginyl-tRNA or glutaminyl-tRNA synthetases. The reaction takes place in the presence of glutamine and ATP through an activated phospho-Asp-tRNA(Asn) or phospho-Glu-tRNA(Gln). In Chlorobium phaeobacteroides (strain BS1), this protein is Aspartyl/glutamyl-tRNA(Asn/Gln) amidotransferase subunit C.